We begin with the raw amino-acid sequence, 117 residues long: LYR motif-containing protein 1 (117 aa).

This sequence belongs to the complex I LYR family.

The sequence is that of LYR motif-containing protein 1 (lyrm1) from Dictyostelium discoideum (Social amoeba).